The following is a 306-amino-acid chain: Curved DNA-binding protein (306 aa).

Positions Asp5–Trp69 constitute a J domain.

It is found in the cytoplasm. Its subcellular location is the nucleoid. Functionally, DNA-binding protein that preferentially recognizes a curved DNA sequence. It is probably a functional analog of DnaJ; displays overlapping activities with DnaJ, but functions under different conditions, probably acting as a molecular chaperone in an adaptive response to environmental stresses other than heat shock. Lacks autonomous chaperone activity; binds native substrates and targets them for recognition by DnaK. Its activity is inhibited by the binding of CbpM. In Escherichia fergusonii (strain ATCC 35469 / DSM 13698 / CCUG 18766 / IAM 14443 / JCM 21226 / LMG 7866 / NBRC 102419 / NCTC 12128 / CDC 0568-73), this protein is Curved DNA-binding protein.